A 130-amino-acid chain; its full sequence is Inner membrane protein YqjF (130 aa).

Over M1–E5 the chain is Cytoplasmic. A helical transmembrane segment spans residues D6–G26. Residues K27–G45 lie on the Periplasmic side of the membrane. A helical transmembrane segment spans residues F46–F66. Topologically, residues L67–T70 are cytoplasmic. The helical transmembrane segment at T71–A91 threads the bilayer. Residues E92–K101 lie on the Periplasmic side of the membrane. A helical membrane pass occupies residues N102–I122. Residues D123–W130 are Cytoplasmic-facing.

Belongs to the DoxX family.

It is found in the cell inner membrane. This is Inner membrane protein YqjF (yqjF) from Escherichia coli (strain K12).